The following is a 536-amino-acid chain: Chromosomal replication initiator protein DnaA (536 aa).

The interval methionine 1–proline 72 is domain I, interacts with DnaA modulators. The segment at proline 72–serine 199 is domain II. The segment at arginine 97 to asparagine 121 is disordered. Residues proline 105 to asparagine 121 show a composition bias toward low complexity. Residues lysine 200–serine 416 form a domain III, AAA+ region region. ATP contacts are provided by glycine 244, glycine 246, lysine 247, and threonine 248. The interval lysine 417–glycine 536 is domain IV, binds dsDNA.

The protein belongs to the DnaA family. Oligomerizes as a right-handed, spiral filament on DNA at oriC.

It localises to the cytoplasm. Functionally, plays an essential role in the initiation and regulation of chromosomal replication. ATP-DnaA binds to the origin of replication (oriC) to initiate formation of the DNA replication initiation complex once per cell cycle. Binds the DnaA box (a 9 base pair repeat at the origin) and separates the double-stranded (ds)DNA. Forms a right-handed helical filament on oriC DNA; dsDNA binds to the exterior of the filament while single-stranded (ss)DNA is stabiized in the filament's interior. The ATP-DnaA-oriC complex binds and stabilizes one strand of the AT-rich DNA unwinding element (DUE), permitting loading of DNA polymerase. After initiation quickly degrades to an ADP-DnaA complex that is not apt for DNA replication. Binds acidic phospholipids. The sequence is that of Chromosomal replication initiator protein DnaA from Burkholderia thailandensis (strain ATCC 700388 / DSM 13276 / CCUG 48851 / CIP 106301 / E264).